A 143-amino-acid chain; its full sequence is AP-2 complex subunit sigma (143 aa).

Belongs to the adaptor complexes small subunit family. Adaptor protein complex 2 (AP-2) is a heterotetramer composed of two large adaptins (alpha-type subunit APL3 and beta-type subunit APL1), a medium chain (mu-type subunit APM4) and a small adaptin (sigma-type subunit APS2).

Its subcellular location is the cell membrane. The protein localises to the membrane. It is found in the coated pit. Functionally, component of the adaptor complexes which link clathrin to receptors in coated vesicles. Clathrin-associated protein complexes are believed to interact with the cytoplasmic tails of membrane proteins, leading to their selection and concentration. The sequence is that of AP-2 complex subunit sigma (aps-2) from Neurospora crassa (strain ATCC 24698 / 74-OR23-1A / CBS 708.71 / DSM 1257 / FGSC 987).